The primary structure comprises 277 residues: MKFTKMHGLGNDYIYVDAISQKIENPNEISRFVSDRHFGIGSDGLVLILPSDLADFKMRMFNSDGSEAEMCGNAIRCVGKFVYDKKMTDKSTITIETLAGIKVLEMTIENDKVVLVKVDMGEPILKAETIPVLSEKHPVIDEEITAKDYCYNFTCVSIGNPHAITYIENVEEFPLEKIGPLFEIHEKFPRKTNVEFVELIDDSTVKMRVWERGAGETLACGTGACAVLVASVLKGYVGRKATVKLLGGDLTIEWNESDNHIYMTGPATTVFEGEIDI.

2 residues coordinate substrate: N11 and N62. The active-site Proton donor is the C71. Substrate is bound by residues 72–73, N160, N193, and 211–212; these read GN and ER. C220 (proton acceptor) is an active-site residue. 221 to 222 is a substrate binding site; that stretch reads GT.

Belongs to the diaminopimelate epimerase family. Homodimer.

The protein localises to the cytoplasm. It carries out the reaction (2S,6S)-2,6-diaminopimelate = meso-2,6-diaminopimelate. Its pathway is amino-acid biosynthesis; L-lysine biosynthesis via DAP pathway; DL-2,6-diaminopimelate from LL-2,6-diaminopimelate: step 1/1. Functionally, catalyzes the stereoinversion of LL-2,6-diaminopimelate (L,L-DAP) to meso-diaminopimelate (meso-DAP), a precursor of L-lysine. This chain is Diaminopimelate epimerase, found in Methanococcus maripaludis (strain C6 / ATCC BAA-1332).